Here is a 319-residue protein sequence, read N- to C-terminus: Ribonuclease Z (319 aa).

His62, His64, Asp66, His67, His145, Asp215, and His273 together coordinate Zn(2+). Asp66 functions as the Proton acceptor in the catalytic mechanism.

It belongs to the RNase Z family. As to quaternary structure, homodimer. Requires Zn(2+) as cofactor.

It carries out the reaction Endonucleolytic cleavage of RNA, removing extra 3' nucleotides from tRNA precursor, generating 3' termini of tRNAs. A 3'-hydroxy group is left at the tRNA terminus and a 5'-phosphoryl group is left at the trailer molecule.. Zinc phosphodiesterase, which displays some tRNA 3'-processing endonuclease activity. Probably involved in tRNA maturation, by removing a 3'-trailer from precursor tRNA. This chain is Ribonuclease Z, found in Borreliella afzelii (strain PKo) (Borrelia afzelii).